The sequence spans 343 residues: GTPase Obg (343 aa).

Residues 1-159 (MQFIDHATIC…RQLRLELKLL (159 aa)) form the Obg domain. The region spanning 160–328 (AEVGLIGLPN…LLRLVWQWLD (169 aa)) is the OBG-type G domain. Residues 166 to 173 (GLPNAGKS), 191 to 195 (FTTLV), 213 to 216 (DIPG), 280 to 283 (NKID), and 309 to 311 (SSA) each bind GTP. Mg(2+) is bound by residues Ser173 and Thr193.

The protein belongs to the TRAFAC class OBG-HflX-like GTPase superfamily. OBG GTPase family. Monomer. Requires Mg(2+) as cofactor.

The protein resides in the cytoplasm. In terms of biological role, an essential GTPase which binds GTP, GDP and possibly (p)ppGpp with moderate affinity, with high nucleotide exchange rates and a fairly low GTP hydrolysis rate. Plays a role in control of the cell cycle, stress response, ribosome biogenesis and in those bacteria that undergo differentiation, in morphogenesis control. The chain is GTPase Obg from Synechococcus elongatus (strain ATCC 33912 / PCC 7942 / FACHB-805) (Anacystis nidulans R2).